A 425-amino-acid chain; its full sequence is Imidazolonepropionase (425 aa).

2 residues coordinate Fe(3+): H78 and H80. 2 residues coordinate Zn(2+): H78 and H80. Positions 87, 150, and 183 each coordinate 4-imidazolone-5-propanoate. Residue Y150 participates in N-formimidoyl-L-glutamate binding. H248 provides a ligand contact to Fe(3+). Zn(2+) is bound at residue H248. Residue Q251 participates in 4-imidazolone-5-propanoate binding. D323 provides a ligand contact to Fe(3+). D323 lines the Zn(2+) pocket. N-formimidoyl-L-glutamate is bound by residues N325 and G327. T328 provides a ligand contact to 4-imidazolone-5-propanoate.

The protein belongs to the metallo-dependent hydrolases superfamily. HutI family. Zn(2+) is required as a cofactor. Fe(3+) serves as cofactor.

The protein localises to the cytoplasm. It catalyses the reaction 4-imidazolone-5-propanoate + H2O = N-formimidoyl-L-glutamate. The protein operates within amino-acid degradation; L-histidine degradation into L-glutamate; N-formimidoyl-L-glutamate from L-histidine: step 3/3. In terms of biological role, catalyzes the hydrolytic cleavage of the carbon-nitrogen bond in imidazolone-5-propanoate to yield N-formimidoyl-L-glutamate. It is the third step in the universal histidine degradation pathway. This Polaromonas sp. (strain JS666 / ATCC BAA-500) protein is Imidazolonepropionase.